The primary structure comprises 142 residues: Large ribosomal subunit protein uL11 (142 aa).

This sequence belongs to the universal ribosomal protein uL11 family. In terms of assembly, part of the ribosomal stalk of the 50S ribosomal subunit. Interacts with L10 and the large rRNA to form the base of the stalk. L10 forms an elongated spine to which L12 dimers bind in a sequential fashion forming a multimeric L10(L12)X complex. Post-translationally, one or more lysine residues are methylated.

Forms part of the ribosomal stalk which helps the ribosome interact with GTP-bound translation factors. The protein is Large ribosomal subunit protein uL11 of Maricaulis maris (strain MCS10) (Caulobacter maris).